A 320-amino-acid chain; its full sequence is Zinc finger protein 330 (320 aa).

The tract at residues 1–23 (MPKKKTGARKKAENRREREKQLR) is disordered. Residues 3-11 (KKKTGARKK) carry the Nuclear localization signal motif. The span at 10-22 (KKAENRREREKQL) shows a compositional bias: basic and acidic residues. 4 C4-type zinc fingers span residues 42-58 (CDKC…CYFC), 67-104 (CAQC…CDFC), 129-149 (CVEC…CSFC), and 175-189 (CVSC…CLRC). The disordered stretch occupies residues 206–320 (EKGKQPPCPK…GYAHYEEQEN (115 aa)). The segment covering 216-225 (CGHETQETKD) has biased composition (basic and acidic residues). Over residues 269–285 (DEEEDEYEAEDDEEEED) the composition is skewed to acidic residues. Ser291 is modified (phosphoserine).

This sequence belongs to the NOA36 family. Widely expressed. Higher expression seen in heart and skeletal muscle.

The protein resides in the nucleus. It localises to the nucleolus. The protein localises to the chromosome. It is found in the centromere. In Homo sapiens (Human), this protein is Zinc finger protein 330 (ZNF330).